Reading from the N-terminus, the 586-residue chain is MWPNLFWGFDAYDGSNFNAFPIYFPTEFMQTEPRDQSSCQQLSMEQATEPSMNPDQEDIVEGGENYGELSNQQETVPSFENADQNLSRLEMSTLARELKEKVKQSRALRQSVNNAAEQQPSTKPQPVQQEVQDLINDILKSQDQDDNLKNPSKLTGPQDDTETEKPASTLPTTPRTIKESPLSTYSIPVYCPASPEGRTHIPDEILDNAPKGPRHTHRGQVQMFCNGECGRRETDKAMPAIEPSDKTEETEGATAVRIPPVATDGDLEQDVIMWLRHTGFYDKAKRTDALARWKQLAKMEQGLARPQQDHQEAGVALASASQGSKEAGMGTRPGPDADCPPVCRPEQGGPGSSQAALSCKSKQSTDIQRATLAETRGGSLRDRAANQQPSKKSDRGRCARRHRSSSPRGRSGSHKSRRATTDSPVSRSTTKSTPSRARQPGHRDYREYRDDRNRDTKPRSPLVSCRAAVAFNPGVKGAPLVRQRFRPRQTNTDLQHKARIVGAPPRDMESNIKERQNHDPERQSGQFGIRWLCTSPLALQNTKSLRNSFDDLKPVLLGRDGQEMDDYCGRDLLRLMDASERGLHRP.

Disordered stretches follow at residues 98–128 (LKEK…QPVQ), 141–181 (SQDQ…KESP), and 301–464 (QGLA…PLVS). 3 stretches are compositionally biased toward polar residues: residues 107-128 (ALRQ…QPVQ), 169-181 (TLPT…KESP), and 352-368 (SSQA…TDIQ). Over residues 398–418 (CARRHRSSSPRGRSGSHKSRR) the composition is skewed to basic residues. The span at 421 to 436 (TDSPVSRSTTKSTPSR) shows a compositional bias: polar residues. Positions 435 to 576 (SRARQPGHRD…YCGRDLLRLM (142 aa)) constitute a YTH domain. Residues 441–458 (GHRDYREYRDDRNRDTKP) are compositionally biased toward basic and acidic residues.

This sequence belongs to the YTHDF family. YTHDF1 subfamily.

Specifically recognizes and binds N6-methyladenosine (m6A)-containing mRNAs, and regulates their stability. M6A is a modification present at internal sites of mRNAs and some non-coding RNAs and plays a role in mRNA stability and processing. Plays a role in pathogenicity towards plant host. This chain is YTH domain-containing family protein 2, found in Pyricularia oryzae (strain 70-15 / ATCC MYA-4617 / FGSC 8958) (Rice blast fungus).